The primary structure comprises 1294 residues: uncharacterized protein (1294 aa).

Topologically, residues 1-375 (MSQQENGDVA…RNFKLNFSDY (375 aa)) are extracellular. An ABC transporter 1 domain is found at 28-287 (LHVRDLSIVA…FESIGYHVPQ (260 aa)). The N-linked (GlcNAc...) asparagine glycan is linked to Asn41. Residue 62–69 (GGSGSGKT) coordinates ATP. N-linked (GlcNAc...) asparagine glycosylation is found at Asn86, Asn101, Asn151, Asn341, Asn349, and Asn371. Residues 376 to 396 (VTLISTFAEPLIIGTVCGWIY) traverse the membrane as a helical segment. The Cytoplasmic portion of the chain corresponds to 397–495 (YKPDKSSIGG…EADARKFFYQ (99 aa)). A helical transmembrane segment spans residues 496–516 (FAVVFLCQLSCSGLSMLSVAV). Residues 517–530 (SRDFSKASLVGNMT) are Extracellular-facing. A glycan (N-linked (GlcNAc...) asparagine) is linked at Asn528. Residues 531–551 (FTVLSMGCGFFVNAKVMPVYV) traverse the membrane as a helical segment. Topologically, residues 552 to 604 (RWIKYIAFTWYSFGTLMSSTFTNSYCTTDNLDECLGNQILEVYGFPRNWITVP) are cytoplasmic. The chain crosses the membrane as a helical span at residues 605 to 625 (AVVLLCWSVGYFVVGAIILYL). The Extracellular segment spans residues 626 to 1038 (HKIDITLQNE…TTTRRSFDSL (413 aa)). The region spanning 679–941 (IKLEDIDLRV…FTELGYNCPS (263 aa)) is the ABC transporter 2 domain. 727–734 (GPSGSGKS) lines the ATP pocket. N-linked (GlcNAc...) asparagine glycosylation is present at Asn983. A helical membrane pass occupies residues 1039 to 1059 (MARIAQIPGLGVIFALFFAPV). The Cytoplasmic portion of the chain corresponds to 1060–1120 (KHNYTSISNR…PFFLAYMTLE (61 aa)). A helical transmembrane segment spans residues 1121–1141 (LPLSALASVLYAVFTVLACGL). Residues 1142 to 1266 (PRTAGNFFAT…YGLVRNTQKY (125 aa)) lie on the Extracellular side of the membrane. Residues 1267-1287 (LGIIVCVAIIYRLIAFFILKA) traverse the membrane as a helical segment. At 1288–1294 (KLEWIKW) the chain is on the cytoplasmic side.

Belongs to the ABC transporter superfamily. ABCG family. PDR (TC 3.A.1.205) subfamily.

It is found in the membrane. This is an uncharacterized protein from Saccharomyces cerevisiae (strain ATCC 204508 / S288c) (Baker's yeast).